The chain runs to 112 residues: Divalent-cation tolerance protein CutA (112 aa).

Residues cysteine 16, histidine 83, and histidine 84 each coordinate Cu cation.

It belongs to the CutA family. Homotrimer. Requires Cu cation as cofactor.

It is found in the cytoplasm. In terms of biological role, involved in resistance toward heavy metals. This chain is Divalent-cation tolerance protein CutA, found in Escherichia coli O81 (strain ED1a).